Here is a 175-residue protein sequence, read N- to C-terminus: Sec-independent protein translocase protein TatB (175 aa).

Residues 1–21 (MLDLGLSKMALIGVVALVVLG) form a helical membrane-spanning segment. Low complexity predominate over residues 94 to 115 (SAVSPGGSAAADAPDGPSAASG). Disordered regions lie at residues 94-118 (SAVSPGGSAAADAPDGPSAASGEPS) and 153-175 (VQSGAARVARHRPASLRRPARFL). A compositionally biased stretch (basic residues) spans 160-175 (VARHRPASLRRPARFL).

The protein belongs to the TatB family. As to quaternary structure, the Tat system comprises two distinct complexes: a TatABC complex, containing multiple copies of TatA, TatB and TatC subunits, and a separate TatA complex, containing only TatA subunits. Substrates initially bind to the TatABC complex, which probably triggers association of the separate TatA complex to form the active translocon.

The protein resides in the cell inner membrane. Its function is as follows. Part of the twin-arginine translocation (Tat) system that transports large folded proteins containing a characteristic twin-arginine motif in their signal peptide across membranes. Together with TatC, TatB is part of a receptor directly interacting with Tat signal peptides. TatB may form an oligomeric binding site that transiently accommodates folded Tat precursor proteins before their translocation. The protein is Sec-independent protein translocase protein TatB of Burkholderia pseudomallei (strain 1106a).